A 327-amino-acid chain; its full sequence is Methionyl-tRNA formyltransferase (327 aa).

(6S)-5,6,7,8-tetrahydrofolate is bound at residue 121–124 (SLLP).

It belongs to the Fmt family.

It catalyses the reaction L-methionyl-tRNA(fMet) + (6R)-10-formyltetrahydrofolate = N-formyl-L-methionyl-tRNA(fMet) + (6S)-5,6,7,8-tetrahydrofolate + H(+). Its function is as follows. Attaches a formyl group to the free amino group of methionyl-tRNA(fMet). The formyl group appears to play a dual role in the initiator identity of N-formylmethionyl-tRNA by promoting its recognition by IF2 and preventing the misappropriation of this tRNA by the elongation apparatus. In Paraburkholderia phymatum (strain DSM 17167 / CIP 108236 / LMG 21445 / STM815) (Burkholderia phymatum), this protein is Methionyl-tRNA formyltransferase.